A 134-amino-acid chain; its full sequence is Ion transport peptide-like (134 aa).

Intrachain disulfides connect cysteine 62–cysteine 98, cysteine 78–cysteine 94, and cysteine 81–cysteine 107.

The protein belongs to the arthropod CHH/MIH/GIH/VIH hormone family.

It localises to the secreted. The protein is Ion transport peptide-like of Schistocerca gregaria (Desert locust).